The following is a 266-amino-acid chain: 4-hydroxy-tetrahydrodipicolinate reductase (266 aa).

10-15 (GPRGRM) is a binding site for NAD(+). An NADP(+)-binding site is contributed by Lys-38. NAD(+) contacts are provided by residues 99–101 (GTT) and 125–128 (APNF). The active-site Proton donor/acceptor is His-155. Position 156 (His-156) interacts with (S)-2,3,4,5-tetrahydrodipicolinate. Catalysis depends on Lys-159, which acts as the Proton donor. Position 165–166 (165–166 (GT)) interacts with (S)-2,3,4,5-tetrahydrodipicolinate.

Belongs to the DapB family.

Its subcellular location is the cytoplasm. The catalysed reaction is (S)-2,3,4,5-tetrahydrodipicolinate + NAD(+) + H2O = (2S,4S)-4-hydroxy-2,3,4,5-tetrahydrodipicolinate + NADH + H(+). It carries out the reaction (S)-2,3,4,5-tetrahydrodipicolinate + NADP(+) + H2O = (2S,4S)-4-hydroxy-2,3,4,5-tetrahydrodipicolinate + NADPH + H(+). It participates in amino-acid biosynthesis; L-lysine biosynthesis via DAP pathway; (S)-tetrahydrodipicolinate from L-aspartate: step 4/4. Functionally, catalyzes the conversion of 4-hydroxy-tetrahydrodipicolinate (HTPA) to tetrahydrodipicolinate. In Bacillus thuringiensis subsp. konkukian (strain 97-27), this protein is 4-hydroxy-tetrahydrodipicolinate reductase.